Here is a 136-residue protein sequence, read N- to C-terminus: Putative nickel-responsive regulator (136 aa).

Ni(2+)-binding residues include H76, H87, H89, and C95.

Belongs to the transcriptional regulatory CopG/NikR family. It depends on Ni(2+) as a cofactor.

Transcriptional regulator. The protein is Putative nickel-responsive regulator of Desulfotalea psychrophila (strain LSv54 / DSM 12343).